Consider the following 100-residue polypeptide: Aspartyl/glutamyl-tRNA(Asn/Gln) amidotransferase subunit C (100 aa).

This sequence belongs to the GatC family. As to quaternary structure, heterotrimer of A, B and C subunits.

It catalyses the reaction L-glutamyl-tRNA(Gln) + L-glutamine + ATP + H2O = L-glutaminyl-tRNA(Gln) + L-glutamate + ADP + phosphate + H(+). The enzyme catalyses L-aspartyl-tRNA(Asn) + L-glutamine + ATP + H2O = L-asparaginyl-tRNA(Asn) + L-glutamate + ADP + phosphate + 2 H(+). Allows the formation of correctly charged Asn-tRNA(Asn) or Gln-tRNA(Gln) through the transamidation of misacylated Asp-tRNA(Asn) or Glu-tRNA(Gln) in organisms which lack either or both of asparaginyl-tRNA or glutaminyl-tRNA synthetases. The reaction takes place in the presence of glutamine and ATP through an activated phospho-Asp-tRNA(Asn) or phospho-Glu-tRNA(Gln). This Streptococcus pneumoniae (strain JJA) protein is Aspartyl/glutamyl-tRNA(Asn/Gln) amidotransferase subunit C.